The chain runs to 37 residues: MKIRASVRKICEKCRLIRRRGRVMVICSNPRHKQRQG.

Belongs to the bacterial ribosomal protein bL36 family.

The protein resides in the plastid. Its subcellular location is the chloroplast. The protein is Large ribosomal subunit protein bL36c of Cycas taitungensis (Prince sago).